Reading from the N-terminus, the 299-residue chain is Methionine aminopeptidase (299 aa).

Substrate is bound at residue His64. Positions 84, 95, and 158 each coordinate a divalent metal cation. Residue His166 coordinates substrate. Residues Glu191 and Glu284 each contribute to the a divalent metal cation site.

It belongs to the peptidase M24A family. Methionine aminopeptidase archaeal type 2 subfamily. In terms of assembly, monomer. Co(2+) is required as a cofactor. Zn(2+) serves as cofactor. Requires Mn(2+) as cofactor. The cofactor is Fe(2+).

It catalyses the reaction Release of N-terminal amino acids, preferentially methionine, from peptides and arylamides.. In terms of biological role, removes the N-terminal methionine from nascent proteins. The N-terminal methionine is often cleaved when the second residue in the primary sequence is small and uncharged (Met-Ala-, Cys, Gly, Pro, Ser, Thr, or Val). The polypeptide is Methionine aminopeptidase (Methanothermobacter thermautotrophicus (strain ATCC 29096 / DSM 1053 / JCM 10044 / NBRC 100330 / Delta H) (Methanobacterium thermoautotrophicum)).